The sequence spans 140 residues: Nucleoside diphosphate kinase (140 aa).

ATP-binding residues include lysine 11, phenylalanine 59, arginine 87, threonine 93, arginine 104, and asparagine 114. Histidine 117 (pros-phosphohistidine intermediate) is an active-site residue.

Belongs to the NDK family. As to quaternary structure, homotetramer. Mg(2+) is required as a cofactor.

It is found in the cytoplasm. The enzyme catalyses a 2'-deoxyribonucleoside 5'-diphosphate + ATP = a 2'-deoxyribonucleoside 5'-triphosphate + ADP. It carries out the reaction a ribonucleoside 5'-diphosphate + ATP = a ribonucleoside 5'-triphosphate + ADP. In terms of biological role, major role in the synthesis of nucleoside triphosphates other than ATP. The ATP gamma phosphate is transferred to the NDP beta phosphate via a ping-pong mechanism, using a phosphorylated active-site intermediate. This is Nucleoside diphosphate kinase from Rhizobium johnstonii (strain DSM 114642 / LMG 32736 / 3841) (Rhizobium leguminosarum bv. viciae).